The chain runs to 1194 residues: Phosphatidylinositol-3,5-bisphosphate 3-phosphatase MTMR3 (1194 aa).

S4 carries the phosphoserine modification. The Myotubularin phosphatase domain occupies 151 to 572 (EHVTSRFKNE…RNLMLWSAVY (422 aa)). Residues N322, N347, and I348 each coordinate a 1,2-diacyl-sn-glycero-3-phospho-(1D-myo-inositol-3,5-bisphosphate). Positions 322, 347, and 348 each coordinate a 1,2-diacyl-sn-glycero-3-phospho-(1D-myo-inositol-3-phosphate). C409 serves as the catalytic Phosphocysteine intermediate. 8 residues coordinate a 1,2-diacyl-sn-glycero-3-phospho-(1D-myo-inositol-3,5-bisphosphate): S410, D411, G412, W413, D414, R415, K451, and R455. 6 residues coordinate a 1,2-diacyl-sn-glycero-3-phospho-(1D-myo-inositol-3-phosphate): S410, D411, G412, W413, D414, and R415. Position 455 (R455) interacts with a 1,2-diacyl-sn-glycero-3-phospho-(1D-myo-inositol-3-phosphate). The interval 583–609 (DDSCAPYPAPGTSPDEPPLSRLPKTRS) is disordered. A compositionally biased stretch (pro residues) spans 589 to 599 (YPAPGTSPDEP). Residues S609, S629, S643, and S647 each carry the phosphoserine modification. A compositionally biased stretch (basic and acidic residues) spans 693-724 (TKEESGVEEPTHREHTEVPEVKEEAPLAKESR). Disordered regions lie at residues 693–731 (TKEE…QGSG), 852–871 (ESGP…RFSG), and 876–897 (PIAP…HRTS). The residue at position 725 (T725) is a Phosphothreonine. Position 904 is a phosphoserine (S904). 2 disordered regions span residues 932 to 971 (NKAS…HQLS) and 988 to 1017 (KWLN…DGMP). A compositionally biased stretch (polar residues) spans 991–1006 (NSHSGRPSTTNSPEQP). Residues 1025-1058 (QRLRQIESGHQQEVETLKKQVQELKSRLESQYLT) adopt a coiled-coil conformation. S1060 carries the post-translational modification Phosphoserine. The segment at 1115–1175 (DHLAAHCYAC…VCKSCYSSLH (61 aa)) adopts an FYVE-type zinc-finger fold. Zn(2+) is bound by residues C1121, C1124, C1137, C1140, C1145, C1148, C1167, and C1170.

It belongs to the protein-tyrosine phosphatase family. Non-receptor class myotubularin subfamily. In terms of assembly, forms heterodimers with MTMR4 that recruit both CEP55 and PLK1; occurs during early mitosis, regulates the phosphorylation of CEP55 by PLK1 and its recruitment to the midbody where it mediates cell abscission.

Its subcellular location is the cytoplasm. It is found in the cytosol. The protein resides in the membrane. It carries out the reaction a 1,2-diacyl-sn-glycero-3-phospho-(1D-myo-inositol-3,5-bisphosphate) + H2O = a 1,2-diacyl-sn-glycero-3-phospho-(1D-myo-inositol-5-phosphate) + phosphate. The catalysed reaction is a 1,2-diacyl-sn-glycero-3-phospho-(1D-myo-inositol-3-phosphate) + H2O = a 1,2-diacyl-sn-glycero-3-phospho-(1D-myo-inositol) + phosphate. It catalyses the reaction 1,2-dihexadecanoyl-sn-glycero-3-phospho-(1D-myo-inositol-3-phosphate) + H2O = 1,2-dihexadecanoyl-sn-glycero-3-phospho-(1D-myo-inositol) + phosphate. The enzyme catalyses 1,2-dioctanoyl-sn-glycero-3-phospho-(1-D-myo-inositol-3-phosphate) + H2O = 1,2-dioctanoyl-sn-glycero-3-phospho-(1D-myo-inositol) + phosphate. It carries out the reaction 1,2-dihexadecanoyl-sn-glycero-3-phospho-(1D-myo-inositol-3,5-phosphate) + H2O = 1,2-dihexadecanoyl-sn-glycero-3-phospho-(1D-myo-inositol-5-phosphate) + phosphate. Its function is as follows. Lipid phosphatase that specifically dephosphorylates the D-3 position of phosphatidylinositol 3-phosphate and phosphatidylinositol 3,5-bisphosphate, generating phosphatidylinositol and phosphatidylinositol 5-phosphate. Decreases the levels of phosphatidylinositol 3-phosphate, a phospholipid found in cell membranes where it acts as key regulator of both cell signaling and intracellular membrane traffic. Could also have a molecular sequestering/adapter activity and regulate biological processes independently of its phosphatase activity. It includes the regulation of midbody abscission during mitotic cytokinesis. In Rattus norvegicus (Rat), this protein is Phosphatidylinositol-3,5-bisphosphate 3-phosphatase MTMR3.